Reading from the N-terminus, the 324-residue chain is MALLALASAVPSALLALAVFRVPAWACLLCFTTYSERLRICQMFVGMRSPKLEECEEAFTAAFQGLSDTEINYDERSHLHDTFTQMTHALQELAAAQGSFEVAFPDAAEKMKKVITQLKEAQACIPPCGLQEFARRFLCSGCYSRVCDLPLDCPVQDVTVTRGDQAMFSCIVNFQLPKEEITYSWKFAGGGLRTQDLSYFRDMPRAEGYLARIRPAQLTHRGTFSCVIKQDQRPLARLYFFLNVTGPPPRAETELQASFREVLRWAPRDAELIEPWRPSLGELLARPEALTPSNLFLLAVLGALASASATVLAWMFFRWYCSGN.

The signal sequence occupies residues 1-26; that stretch reads MALLALASAVPSALLALAVFRVPAWA. A CXXC motif motif is present at residues 27–30; sequence CLLC. Intrachain disulfides connect Cys27–Cys139, Cys30–Cys142, Cys41–Cys55, Cys124–Cys147, Cys128–Cys153, and Cys170–Cys226. Residues 27 to 295 lie on the Extracellular side of the membrane; that stretch reads CLLCFTTYSE…RPEALTPSNL (269 aa). Positions 139–142 match the CXXC motif motif; the sequence is CSGC. The Ig-like domain occupies 150–236; it reads PLDCPVQDVT…VIKQDQRPLA (87 aa). N-linked (GlcNAc...) asparagine glycosylation is present at Asn243. A helical membrane pass occupies residues 296 to 316; that stretch reads FLLAVLGALASASATVLAWMF. The Cytoplasmic portion of the chain corresponds to 317-324; the sequence is FRWYCSGN.

The protein belongs to the SPACA6 family. Forms a complex with IZUMO1 and TMEM81 on spermatocyte cell membrane required for fertilization. Detected at the sperm head, equatorial region, neck and midpiece (at protein level). Expressed in testis.

It localises to the cytoplasmic vesicle. It is found in the secretory vesicle. The protein localises to the acrosome membrane. In terms of biological role, sperm protein required for fusion of sperm with the egg membrane during fertilization. May regulate the expression of sperm surface protein DCST2. This chain is Sperm acrosome membrane-associated protein 6, found in Homo sapiens (Human).